Here is a 269-residue protein sequence, read N- to C-terminus: uncharacterized protein (269 aa).

5 helical membrane-spanning segments follow: residues 65-85 (FSLF…LFVM), 156-176 (VTSV…ISMV), 182-202 (YTRI…WLGF), 206-226 (MMSF…NDFW), and 242-262 (TLSA…EFSF). Positions 266-269 (KKKW) match the Di-lysine motif motif.

This sequence belongs to the SURF4 family.

The protein resides in the membrane. This is an uncharacterized protein from Caenorhabditis elegans.